A 217-amino-acid chain; its full sequence is Orotate phosphoribosyltransferase (217 aa).

Position 26 (Lys-26) interacts with 5-phospho-alpha-D-ribose 1-diphosphate. Residue 34 to 35 (FF) coordinates orotate. Residues 72–73 (YK), Arg-99, Lys-100, Lys-103, His-105, and 124–132 (DDVITAGTA) contribute to the 5-phospho-alpha-D-ribose 1-diphosphate site. Thr-128 and Arg-156 together coordinate orotate.

The protein belongs to the purine/pyrimidine phosphoribosyltransferase family. PyrE subfamily. As to quaternary structure, homodimer. The cofactor is Mg(2+).

The enzyme catalyses orotidine 5'-phosphate + diphosphate = orotate + 5-phospho-alpha-D-ribose 1-diphosphate. The protein operates within pyrimidine metabolism; UMP biosynthesis via de novo pathway; UMP from orotate: step 1/2. In terms of biological role, catalyzes the transfer of a ribosyl phosphate group from 5-phosphoribose 1-diphosphate to orotate, leading to the formation of orotidine monophosphate (OMP). In Aeromonas salmonicida (strain A449), this protein is Orotate phosphoribosyltransferase.